Reading from the N-terminus, the 377-residue chain is Flagellar P-ring protein (377 aa).

A signal peptide spans 1-30; that stretch reads MLARFLSSLLKASVTALAVVVAFGFAANFA.

The protein belongs to the FlgI family. The basal body constitutes a major portion of the flagellar organelle and consists of four rings (L,P,S, and M) mounted on a central rod.

It localises to the periplasm. It is found in the bacterial flagellum basal body. Its function is as follows. Assembles around the rod to form the L-ring and probably protects the motor/basal body from shearing forces during rotation. The sequence is that of Flagellar P-ring protein from Cupriavidus pinatubonensis (strain JMP 134 / LMG 1197) (Cupriavidus necator (strain JMP 134)).